The primary structure comprises 197 residues: MTGDRRDEYYWKAKKEQLRSRAAFKLEFLLDRYRVVRKGDAVIEIGSSPGGWTQVLNSLARKIISIDLQEMEEIAGVRFIRCDIFKETIFDDIDRALREEGIEKVDDVVSDAMAKVSGIPSRDHAVSYQIGQRVMEIAVRYLRNGGNVLLKQFQGDMTNDFIAIWRKNFSSYKISKPPASRGSSSEIYIMFFGFKAP.

S-adenosyl-L-methionine contacts are provided by Gly50, Trp52, Asp67, Asp83, and Asp111. Lys151 acts as the Proton acceptor in catalysis.

The protein belongs to the class I-like SAM-binding methyltransferase superfamily. RNA methyltransferase RlmE family.

It localises to the cytoplasm. It carries out the reaction uridine(2552) in 23S rRNA + S-adenosyl-L-methionine = 2'-O-methyluridine(2552) in 23S rRNA + S-adenosyl-L-homocysteine + H(+). In terms of biological role, specifically methylates the uridine in position 2552 of 23S rRNA at the 2'-O position of the ribose in the fully assembled 50S ribosomal subunit. The chain is Ribosomal RNA large subunit methyltransferase E from Thermoplasma volcanium (strain ATCC 51530 / DSM 4299 / JCM 9571 / NBRC 15438 / GSS1).